The chain runs to 353 residues: Deoxyhypusine synthase (353 aa).

NAD(+) is bound by residues 90 to 94, 116 to 118, glutamate 122, and aspartate 228; these read SNLIS and TAG. Residue 121–122 coordinates spermidine; the sequence is EE. Aspartate 233 contacts spermidine. NAD(+) is bound at residue glycine 275. Histidine 280 is a binding site for spermidine. Position 300-301 (300-301) interacts with NAD(+); that stretch reads TA. Spermidine-binding positions include 306 to 308 and 315 to 321; these read GSD and EAVSWGK. The active-site Nucleophile is the lysine 321. 334–335 contributes to the NAD(+) binding site; it reads EA.

Belongs to the deoxyhypusine synthase family. Homotetramer. NAD(+) serves as cofactor.

The enzyme catalyses [eIF5A protein]-L-lysine + spermidine = [eIF5A protein]-deoxyhypusine + propane-1,3-diamine. The protein operates within protein modification; eIF5A hypusination. Functionally, catalyzes the NAD-dependent oxidative cleavage of spermidine and the subsequent transfer of the butylamine moiety of spermidine to the epsilon-amino group of a specific lysine residue of the eIF-5A precursor protein to form the intermediate deoxyhypusine residue. In Neurospora crassa (strain ATCC 24698 / 74-OR23-1A / CBS 708.71 / DSM 1257 / FGSC 987), this protein is Deoxyhypusine synthase (dys-1).